Reading from the N-terminus, the 328-residue chain is Nickel import system permease protein NikB (328 aa).

6 helical membrane passes run 11–31 (LMQM…LMKL), 104–124 (LLIS…LGII), 139–159 (VIST…LLFI), 170–190 (ILSQ…AYII), 229–249 (ILPI…GTVV), and 279–299 (VLFI…LTLL). Positions 100-297 (APITLLISFS…IINTIADLLT (198 aa)) constitute an ABC transmembrane type-1 domain.

Belongs to the binding-protein-dependent transport system permease family. OppBC subfamily. The complex is composed of two ATP-binding proteins (NikD and NikE), two transmembrane proteins (NikB and NikC) and a solute-binding protein (NikA).

It localises to the cell membrane. In terms of biological role, part of the ABC transporter complex NikABCDE (Opp2) involved in nickel import. Probably responsible for the translocation of the substrate across the membrane. The sequence is that of Nickel import system permease protein NikB from Staphylococcus aureus (strain USA300).